The following is a 229-amino-acid chain: Protein GrpE (229 aa).

Residues 1–89 form a disordered region; it reads MSDFNKDDYL…AEGSSLTPLG (89 aa). Low complexity predominate over residues 24 to 36; that stretch reads ASPDADGADAPSD. The segment covering 39–50 has biased composition (basic and acidic residues); sequence EQLKDDMLKDAA. Over residues 65 to 84 the composition is skewed to low complexity; that stretch reads KAAAEATADAASDGDAEGSS.

It belongs to the GrpE family. Homodimer.

It localises to the cytoplasm. Its function is as follows. Participates actively in the response to hyperosmotic and heat shock by preventing the aggregation of stress-denatured proteins, in association with DnaK and GrpE. It is the nucleotide exchange factor for DnaK and may function as a thermosensor. Unfolded proteins bind initially to DnaJ; upon interaction with the DnaJ-bound protein, DnaK hydrolyzes its bound ATP, resulting in the formation of a stable complex. GrpE releases ADP from DnaK; ATP binding to DnaK triggers the release of the substrate protein, thus completing the reaction cycle. Several rounds of ATP-dependent interactions between DnaJ, DnaK and GrpE are required for fully efficient folding. In Bifidobacterium animalis subsp. lactis (strain AD011), this protein is Protein GrpE.